A 715-amino-acid polypeptide reads, in one-letter code: Epidermal growth factor receptor kinase substrate 8-like protein 2 (715 aa).

One can recognise a PID domain in the interval 46-202; that stretch reads MHETSQYHVQ…RQRQSILPPP (157 aa). Residues 183–243 are disordered; that stretch reads QTLKGHQEKI…GFRRRESQEE (61 aa). Positions 199–208 are enriched in pro residues; the sequence is LPPPQGPAPI. Basic and acidic residues-rich tracts occupy residues 213-222 and 234-243; these read RGGDSPEAKN and GFRRRESQEE. S240 carries the post-translational modification Phosphoserine. T303 carries the post-translational modification Phosphothreonine. Residues 448–487 form a disordered region; sequence VSPVSRQSIRNSQKHSPTSEPTPPGDALPPVSSPHTHRGY. A Phosphoserine modification is found at S449. Polar residues predominate over residues 451 to 466; it reads VSRQSIRNSQKHSPTS. T469 is subject to Phosphothreonine. In terms of domain architecture, SH3 spans 492-551; the sequence is AMAKYVKILYDFTARNANELSVLKDEVLEVLEDGRQWWKLRSRSGQAGYVPCNILGEARP. S570 carries the phosphoserine modification.

The protein belongs to the EPS8 family. Interacts with ABI1. Part of a complex that contains SOS1, ABI1 and EPS8L2. Associates with F-actin. As to expression, detected in fibroblasts and placenta.

The protein localises to the cytoplasm. The protein resides in the cell projection. Its subcellular location is the stereocilium. Functionally, stimulates guanine exchange activity of SOS1. May play a role in membrane ruffling and remodeling of the actin cytoskeleton. In the cochlea, is required for stereocilia maintenance in adult hair cells. This is Epidermal growth factor receptor kinase substrate 8-like protein 2 (EPS8L2) from Homo sapiens (Human).